Reading from the N-terminus, the 242-residue chain is Glucosamine-6-phosphate deaminase (242 aa).

D67 functions as the Proton acceptor; for enolization step in the catalytic mechanism. Residue N136 is the For ring-opening step of the active site. Residue H138 is the Proton acceptor; for ring-opening step of the active site. The active-site For ring-opening step is E143.

The protein belongs to the glucosamine/galactosamine-6-phosphate isomerase family. NagB subfamily.

It catalyses the reaction alpha-D-glucosamine 6-phosphate + H2O = beta-D-fructose 6-phosphate + NH4(+). It functions in the pathway amino-sugar metabolism; N-acetylneuraminate degradation; D-fructose 6-phosphate from N-acetylneuraminate: step 5/5. Catalyzes the reversible isomerization-deamination of glucosamine 6-phosphate (GlcN6P) to form fructose 6-phosphate (Fru6P) and ammonium ion. The polypeptide is Glucosamine-6-phosphate deaminase (Clostridium beijerinckii (strain ATCC 51743 / NCIMB 8052) (Clostridium acetobutylicum)).